Here is a 512-residue protein sequence, read N- to C-terminus: MKKIQFFDTTLRDGEQTPGVNFDVKEKIQIALQLEKLGIDVIEAGFPISSPGDFECVKAIAKAIKHCSVTGLARCVEADIDRAEEALKDAVSPQIHIFLATSDVHMEYKLKMSRAEVLASIKHHISYARQKFDVVQFSPEDATRSDRAFLIEAVQTAIDAGATVINIPDTVGYTNPTEFGQLFQDLRREIKQFDDIIFASHCHDDLGMATANALAAIENGARRVEGTINGIGERAGNTALEEVAVALHIRKDFYQAETNIVLNQFKNSSDLISRLSGMPVPRNKAVIGGNAYAHESGIHQDGVLKNPDTYEIITPALVGVDKNSLPLGKLSGKHAFNTRMEEMGYTLSEQEQKDAFKRFKQLADAKKDVTEEDLHALILGQSSESHDAFELKHLQVQYVTGGVQGAIVRIEERDGALIEDAATGSGSIEAIYNTINRLMKQDIELTDYRIQAITAGQDAQAEVHVVIKDDNGTEFHGIGIDFDVLTASAKAYLQASGKSKSTSKQADFEEVK.

The 263-residue stretch at 4 to 266 (IQFFDTTLRD…ETNIVLNQFK (263 aa)) folds into the Pyruvate carboxyltransferase domain. Mn(2+) is bound by residues D13, H201, H203, and N237. The regulatory domain stretch occupies residues 390–512 (ELKHLQVQYV…SKQADFEEVK (123 aa)).

It belongs to the alpha-IPM synthase/homocitrate synthase family. LeuA type 1 subfamily. In terms of assembly, homodimer. Requires Mn(2+) as cofactor.

Its subcellular location is the cytoplasm. It carries out the reaction 3-methyl-2-oxobutanoate + acetyl-CoA + H2O = (2S)-2-isopropylmalate + CoA + H(+). Its pathway is amino-acid biosynthesis; L-leucine biosynthesis; L-leucine from 3-methyl-2-oxobutanoate: step 1/4. Its function is as follows. Catalyzes the condensation of the acetyl group of acetyl-CoA with 3-methyl-2-oxobutanoate (2-ketoisovalerate) to form 3-carboxy-3-hydroxy-4-methylpentanoate (2-isopropylmalate). This Listeria innocua serovar 6a (strain ATCC BAA-680 / CLIP 11262) protein is 2-isopropylmalate synthase.